A 357-amino-acid chain; its full sequence is UDP-N-acetylglucosamine--N-acetylmuramyl-(pentapeptide) pyrophosphoryl-undecaprenol N-acetylglucosamine transferase (357 aa).

Residues 10–12, Asn-124, Ser-189, Ile-244, and Gln-289 contribute to the UDP-N-acetyl-alpha-D-glucosamine site; that span reads TGG.

The protein belongs to the glycosyltransferase 28 family. MurG subfamily.

Its subcellular location is the cell membrane. It carries out the reaction Mur2Ac(oyl-L-Ala-gamma-D-Glu-L-Lys-D-Ala-D-Ala)-di-trans,octa-cis-undecaprenyl diphosphate + UDP-N-acetyl-alpha-D-glucosamine = beta-D-GlcNAc-(1-&gt;4)-Mur2Ac(oyl-L-Ala-gamma-D-Glu-L-Lys-D-Ala-D-Ala)-di-trans,octa-cis-undecaprenyl diphosphate + UDP + H(+). Its pathway is cell wall biogenesis; peptidoglycan biosynthesis. Its function is as follows. Cell wall formation. Catalyzes the transfer of a GlcNAc subunit on undecaprenyl-pyrophosphoryl-MurNAc-pentapeptide (lipid intermediate I) to form undecaprenyl-pyrophosphoryl-MurNAc-(pentapeptide)GlcNAc (lipid intermediate II). The chain is UDP-N-acetylglucosamine--N-acetylmuramyl-(pentapeptide) pyrophosphoryl-undecaprenol N-acetylglucosamine transferase from Lactococcus lactis subsp. lactis (strain IL1403) (Streptococcus lactis).